The sequence spans 784 residues: MSAKSRRPGTGSSQTPNECVQVVVRCRPMSNRERSERSPEVVNVYPNRGVVELQNVVDGNKEQRKVFTYDAAYDASATQTTLYHEVVFPLVSSVLEGFNGCIFAYGQTGTGKTFTMEGVRGNDELMGIIPRTFEQIWLHINRTENFQFLVDVSYLEIYMEELRDLLKPNSKHLEVRERGSGVYVPNLHAINCKSVEDMIKVMQVGNKNRTVGFTNMNEHSSRSHAIFMIKIEMCDTETNTIKVGKLNLIDLAGSERQSKTGASAERLKEASKINLALSSLGNVISALAESSPHVPYRDSKLTRLLQDSLGGNSKTIMIANIGPSNYNYNETLTTLRYASRAKSIQNQPIKNEDPQDAKLKEYQEEIERLKRLIGPQQQQRSEKQVTAKKQRVKKPKKETVTKEMSDSLQVSTIEQPVEDDSDPEGAESESDKENEAEVAKSNEELERERVENSKLAAKLAELEGQLVRGGKNLLDTYSERQIELEKKLVEIAERKKREIEIQQQLELQEETTLEIRERNVSLEQEVELKKRKLSKCYAKYLALQQELNDCKSDHNQDLRELEMAQNELVKELKRQLLIIDNFVPIEVKQRLYTQAKYDEEQEEWKFSSMSLPTPPGGDGKFSSKRPVSHPQRRRPTSEYALQEAKSNSPSSLRFKSENIVNYELEMPCRTTQEYRTPKVSASLQAVLAQAMQTGGDDIDIVDSHTNSLRSRLENIINANANGGAGPGAGVAVGSSIPNVRNIKSSRGLPSAASNLDSNRRPPTGRLPAKKPASAYPKARGLVNK.

Residues 19 to 344 (CVQVVVRCRP…LRYASRAKSI (326 aa)) enclose the Kinesin motor domain. 106-113 (GQTGTGKT) lines the ATP pocket. Positions 351–385 (NEDPQDAKLKEYQEEIERLKRLIGPQQQQRSEKQV) form a coiled coil. Disordered regions lie at residues 371–449 (RLIG…ERER), 605–652 (KFSS…PSSL), and 742–784 (IKSS…LVNK). Positions 386 to 396 (TAKKQRVKKPK) are enriched in basic residues. Residues 416-428 (PVEDDSDPEGAES) are compositionally biased toward acidic residues. Residues 426–582 (AESESDKENE…KRQLLIIDNF (157 aa)) are a coiled coil. A compositionally biased stretch (basic and acidic residues) spans 429–449 (ESDKENEAEVAKSNEELERER). A compositionally biased stretch (basic residues) spans 622–634 (SSKRPVSHPQRRR). Residues 769-778 (KKPASAYPKA) are compositionally biased toward low complexity.

It belongs to the TRAFAC class myosin-kinesin ATPase superfamily. Kinesin family. Kinesin II subfamily. As to expression, expressed primarily in the central nervous system and in a subset of the peripheral nervous system during embryogenesis.

Its subcellular location is the cytoplasm. The protein resides in the cytoskeleton. In terms of biological role, plus-end directed microtubule motor that may be used for anterograde axonal transport and could conceivably move cargos in fly neurons different than those moved by kinesin heavy chain or other plus-end directed motors. In Drosophila melanogaster (Fruit fly), this protein is Kinesin-like protein Klp68D (Klp68D).